Here is a 625-residue protein sequence, read N- to C-terminus: ATP-binding cassette sub-family F member 2 (625 aa).

The disordered stretch occupies residues 1-54; the sequence is MPSDLAKKKAAKKKEAAKARQRPRKGHEENGDAITEPQVAEERNEEANGRETTE. A compositionally biased stretch (basic and acidic residues) spans 40 to 54; the sequence is AEERNEEANGRETTE. 2 consecutive ABC transporter domains span residues 88–327 and 398–615; these read AHII…ENQM and IMVQ…VGEE. ATP is bound at residue 120 to 127; the sequence is GLNGIGKS. The residue at position 220 (Thr-220) is a Phosphothreonine. At Lys-306 the chain carries N6-acetyllysine. Residue 432-439 participates in ATP binding; sequence GPNGAGKS. Residue Ser-514 is modified to Phosphoserine.

The protein belongs to the ABC transporter superfamily. ABCF family. EF3 subfamily.

The chain is ATP-binding cassette sub-family F member 2 (ABCF2) from Bos taurus (Bovine).